We begin with the raw amino-acid sequence, 402 residues long: Putative epoxide hydrolase AFT8 (402 aa).

It belongs to the peptidase S33 family.

Its pathway is mycotoxin biosynthesis. Putative epoxide hydrolase; part of the gene clusters that mediate the biosynthesis of the host-selective toxins (HSTs) AF-toxins responsible for Alternaria black spot of strawberry disease by the strawberry pathotype. AF-toxin I and III are valine derivatives of 2,3-dyhydroxy-isovaleric acid and 2-hydroxy-isovaleric acid respectively, while AF II is an isoleucine derivative of 2-hydroxy-valeric acid. These derivatives are bound to a 9,10-epoxy-8-hydroxy-9-methyl-decatrienoic acid (EDA) moiety. On cellular level, AF-toxins affect plasma membrane of susceptible cells and cause a sudden increase in loss of K(+) after a few minutes of toxin treatment. The aldo-keto reductase AFTS1 catalyzes the conversion of 2-keto-isovaleric acid (2-KIV) to 2-hydroxy-isovaleric acid (2-HIV) by reduction of its ketone to an alcohol. The acyl-CoA ligase AFT1, the hydrolase AFT2 and the enoyl-CoA hydratases AFT3 and AFT6, but also the polyketide synthase AFT9, the acyl-CoA dehydrogenase AFT10, the cytochrome P450 monooxygenase AFT11 and the oxidoreductase AFT12 are all involved in the biosynthesis of the AK-, AF- and ACT-toxin common EDA structural moiety. The exact function of each enzyme, and of additional enzymes identified within the AF-toxin clusters have still to be determined. In Alternaria alternata (Alternaria rot fungus), this protein is Putative epoxide hydrolase AFT8.